Consider the following 94-residue polypeptide: MRMNDYQLEDDPVTKQKYFRRYAPRKGDKIYKEYKKFFFYSDAFRPLKFACEAIIEKYEDEIFELIAQEANHLADMLCNEKSDLCGTPTNSPEP.

The protein belongs to the canopy family.

This chain is Protein canopy homolog 1 (Cnpy1), found in Mus musculus (Mouse).